Here is a 600-residue protein sequence, read N- to C-terminus: Proline--tRNA ligase (600 aa).

The protein belongs to the class-II aminoacyl-tRNA synthetase family. ProS type 1 subfamily. Homodimer.

It is found in the cytoplasm. It catalyses the reaction tRNA(Pro) + L-proline + ATP = L-prolyl-tRNA(Pro) + AMP + diphosphate. Catalyzes the attachment of proline to tRNA(Pro) in a two-step reaction: proline is first activated by ATP to form Pro-AMP and then transferred to the acceptor end of tRNA(Pro). As ProRS can inadvertently accommodate and process non-cognate amino acids such as alanine and cysteine, to avoid such errors it has two additional distinct editing activities against alanine. One activity is designated as 'pretransfer' editing and involves the tRNA(Pro)-independent hydrolysis of activated Ala-AMP. The other activity is designated 'posttransfer' editing and involves deacylation of mischarged Ala-tRNA(Pro). The misacylated Cys-tRNA(Pro) is not edited by ProRS. This chain is Proline--tRNA ligase, found in Prochlorococcus marinus (strain MIT 9215).